Reading from the N-terminus, the 949-residue chain is Lon protease homolog, mitochondrial (949 aa).

The transit peptide at 1 to 65 (MAASTGYVRL…VLPGGVQWRG (65 aa)) directs the protein to the mitochondrion. Disordered regions lie at residues 68–94 (DSGN…TGEG) and 213–240 (EGLE…DELG). In terms of domain architecture, Lon N-terminal spans 112-359 (LPLIAITRNP…KALSLLKKEF (248 aa)). Residues 223–232 (KSRRKLKRGK) show a composition bias toward basic residues. 512–519 (GPPGVGKT) contacts ATP. The Lon proteolytic domain maps to 748–938 (VTPPGVVMGL…RDIFPIAFPR (191 aa)). Active-site residues include Ser844 and Lys887.

The protein belongs to the peptidase S16 family. As to quaternary structure, homohexamer. Organized in a ring with a central cavity. The ATP-binding and proteolytic domains (AP-domain) form a hexameric chamber, while the N-terminal domain is arranged as a trimer of dimers. DNA and RNA binding is stimulated by substrate and inhibited by ATP binding. Interacts with TWNK and mitochondrial DNA polymerase subunit POLG. As to expression, detected in liver &gt; heart &gt; kidney &gt; testis.

The protein resides in the mitochondrion matrix. The enzyme catalyses Hydrolysis of proteins in presence of ATP.. Functionally, ATP-dependent serine protease that mediates the selective degradation of misfolded, unassembled or oxidatively damaged polypeptides as well as certain short-lived regulatory proteins in the mitochondrial matrix. Endogenous substrates include mitochondrial steroidogenic acute regulatory (StAR) protein, DELE1, helicase Twinkle (TWNK) and the large ribosomal subunit protein MRPL32/bL32m. MRPL32/bL32m is protected from degradation by LONP1 when it is bound to a nucleic acid (RNA), but TWNK is not. May also have a chaperone function in the assembly of inner membrane protein complexes. Participates in the regulation of mitochondrial gene expression and in the maintenance of the integrity of the mitochondrial genome. Binds to mitochondrial promoters and RNA in a single-stranded, site-specific, and strand-specific manner. May regulate mitochondrial DNA replication and/or gene expression using site-specific, single-stranded DNA binding to target the degradation of regulatory proteins binding to adjacent sites in mitochondrial promoters. The polypeptide is Lon protease homolog, mitochondrial (Lonp1) (Mus musculus (Mouse)).